We begin with the raw amino-acid sequence, 338 residues long: Glyceraldehyde-3-phosphate dehydrogenase 1 (338 aa).

NAD(+) contacts are provided by residues 13-14 and Gly111; that span reads TI. 140–142 provides a ligand contact to D-glyceraldehyde 3-phosphate; sequence SCN. Cys141 functions as the Nucleophile in the catalytic mechanism. Arg169 lines the NAD(+) pocket. Residue 195–196 coordinates D-glyceraldehyde 3-phosphate; it reads HG. Gln300 is an NAD(+) binding site.

This sequence belongs to the glyceraldehyde-3-phosphate dehydrogenase family. As to quaternary structure, homotetramer.

The protein localises to the cytoplasm. The catalysed reaction is D-glyceraldehyde 3-phosphate + phosphate + NADP(+) = (2R)-3-phospho-glyceroyl phosphate + NADPH + H(+). It carries out the reaction D-glyceraldehyde 3-phosphate + phosphate + NAD(+) = (2R)-3-phospho-glyceroyl phosphate + NADH + H(+). It participates in carbohydrate degradation; glycolysis; pyruvate from D-glyceraldehyde 3-phosphate: step 1/5. In Methanosarcina barkeri (strain Fusaro / DSM 804), this protein is Glyceraldehyde-3-phosphate dehydrogenase 1.